Here is a 1370-residue protein sequence, read N- to C-terminus: DNA-directed RNA polymerase subunit beta (1370 aa).

This sequence belongs to the RNA polymerase beta chain family. In terms of assembly, the RNAP catalytic core consists of 2 alpha, 1 beta, 1 beta' and 1 omega subunit. When a sigma factor is associated with the core the holoenzyme is formed, which can initiate transcription.

The catalysed reaction is RNA(n) + a ribonucleoside 5'-triphosphate = RNA(n+1) + diphosphate. In terms of biological role, DNA-dependent RNA polymerase catalyzes the transcription of DNA into RNA using the four ribonucleoside triphosphates as substrates. This is DNA-directed RNA polymerase subunit beta from Bordetella petrii (strain ATCC BAA-461 / DSM 12804 / CCUG 43448).